The chain runs to 443 residues: Ribosomal protein uS12 methylthiotransferase RimO (443 aa).

The MTTase N-terminal domain maps to 8–118 (PKVGFVSLGC…VVNAVHEVVP (111 aa)). 6 residues coordinate [4Fe-4S] cluster: C17, C53, C82, C151, C155, and C158. The Radical SAM core domain maps to 137–375 (LTPRHYAYLK…MAHQQAISAA (239 aa)). Positions 378–443 (QLRIGKEIDV…DEYDMWAEPI (66 aa)) constitute a TRAM domain.

The protein belongs to the methylthiotransferase family. RimO subfamily. The cofactor is [4Fe-4S] cluster.

It is found in the cytoplasm. The enzyme catalyses L-aspartate(89)-[ribosomal protein uS12]-hydrogen + (sulfur carrier)-SH + AH2 + 2 S-adenosyl-L-methionine = 3-methylsulfanyl-L-aspartate(89)-[ribosomal protein uS12]-hydrogen + (sulfur carrier)-H + 5'-deoxyadenosine + L-methionine + A + S-adenosyl-L-homocysteine + 2 H(+). In terms of biological role, catalyzes the methylthiolation of an aspartic acid residue of ribosomal protein uS12. This Pseudomonas putida (strain ATCC 700007 / DSM 6899 / JCM 31910 / BCRC 17059 / LMG 24140 / F1) protein is Ribosomal protein uS12 methylthiotransferase RimO.